The primary structure comprises 43 residues: MEPATVLSISIGVMVVAITGFSIYTAFGPPSKELVDPFDEHED.

The chain crosses the membrane as a helical span at residues 7–27 (LSISIGVMVVAITGFSIYTAF).

The protein belongs to the PsbN family.

It is found in the cellular thylakoid membrane. Its function is as follows. May play a role in photosystem I and II biogenesis. The chain is Protein PsbN from Trichodesmium erythraeum (strain IMS101).